The chain runs to 153 residues: Nucleoside diphosphate kinase (153 aa).

Positions 11, 59, 87, 93, 104, and 114 each coordinate ATP. The active-site Pros-phosphohistidine intermediate is His-117.

Belongs to the NDK family. In terms of assembly, homotrimer. Mg(2+) is required as a cofactor.

The catalysed reaction is a 2'-deoxyribonucleoside 5'-diphosphate + ATP = a 2'-deoxyribonucleoside 5'-triphosphate + ADP. It carries out the reaction a ribonucleoside 5'-diphosphate + ATP = a ribonucleoside 5'-triphosphate + ADP. In terms of biological role, major role in the synthesis of nucleoside triphosphates other than ATP. The ATP gamma phosphate is transferred to the NDP beta phosphate via a ping-pong mechanism, using a phosphorylated active-site intermediate. This Aspergillus fumigatus (strain ATCC MYA-4609 / CBS 101355 / FGSC A1100 / Af293) (Neosartorya fumigata) protein is Nucleoside diphosphate kinase (ndk1).